The following is a 417-amino-acid chain: Gamma-glutamyl phosphate reductase (417 aa).

It belongs to the gamma-glutamyl phosphate reductase family.

The protein localises to the cytoplasm. The catalysed reaction is L-glutamate 5-semialdehyde + phosphate + NADP(+) = L-glutamyl 5-phosphate + NADPH + H(+). The protein operates within amino-acid biosynthesis; L-proline biosynthesis; L-glutamate 5-semialdehyde from L-glutamate: step 2/2. Functionally, catalyzes the NADPH-dependent reduction of L-glutamate 5-phosphate into L-glutamate 5-semialdehyde and phosphate. The product spontaneously undergoes cyclization to form 1-pyrroline-5-carboxylate. The chain is Gamma-glutamyl phosphate reductase from Serratia marcescens.